Consider the following 890-residue polypeptide: Translation initiation factor IF-2 (890 aa).

Residues 45-304 (LIDHLNQKNS…LQQGFQKPAQ (260 aa)) are disordered. Over residues 67–81 (STLNIPGTGGKSKSV) the composition is skewed to polar residues. Over residues 92–217 (VKRDPQEAER…RMAEENKWTD (126 aa)) the composition is skewed to basic and acidic residues. The segment covering 252–266 (GRGRNAKAARPKKGN) has biased composition (basic residues). Over residues 267 to 280 (KHSESKADREEARA) the composition is skewed to basic and acidic residues. One can recognise a tr-type G domain in the interval 389–558 (PRAPVVTIMG…LLQAEVLELK (170 aa)). Residues 398-405 (GHVDHGKT) are G1. Position 398 to 405 (398 to 405 (GHVDHGKT)) interacts with GTP. The tract at residues 423–427 (GITQH) is G2. Positions 444-447 (DTPG) are G3. Residues 444–448 (DTPGH) and 498–501 (NKID) contribute to the GTP site. Residues 498 to 501 (NKID) form a G4 region. The segment at 534 to 536 (SAK) is G5. Residue K808 is modified to N6-acetyllysine.

Belongs to the TRAFAC class translation factor GTPase superfamily. Classic translation factor GTPase family. IF-2 subfamily.

Its subcellular location is the cytoplasm. Its function is as follows. One of the essential components for the initiation of protein synthesis. Protects formylmethionyl-tRNA from spontaneous hydrolysis and promotes its binding to the 30S ribosomal subunits. Also involved in the hydrolysis of GTP during the formation of the 70S ribosomal complex. The protein is Translation initiation factor IF-2 of Escherichia fergusonii (strain ATCC 35469 / DSM 13698 / CCUG 18766 / IAM 14443 / JCM 21226 / LMG 7866 / NBRC 102419 / NCTC 12128 / CDC 0568-73).